Consider the following 335-residue polypeptide: Cell division protein ZipA (335 aa).

The Periplasmic portion of the chain corresponds to 1-4 (MDLN). The chain crosses the membrane as a helical span at residues 5-25 (AILIILGVIALIILVAHGIWS). At 26 to 335 (NRREKSQYFE…AERDYLARVS (310 aa)) the chain is on the cytoplasmic side.

The protein belongs to the ZipA family. In terms of assembly, interacts with FtsZ via their C-terminal domains.

It is found in the cell inner membrane. Its function is as follows. Essential cell division protein that stabilizes the FtsZ protofilaments by cross-linking them and that serves as a cytoplasmic membrane anchor for the Z ring. Also required for the recruitment to the septal ring of downstream cell division proteins. The sequence is that of Cell division protein ZipA from Histophilus somni (strain 2336) (Haemophilus somnus).